Consider the following 340-residue polypeptide: Mitochondrial amidoxime-reducing component 1 (340 aa).

The N-myristoyl glycine moiety is linked to residue Gly2. Residues 2–24 are Mitochondrial matrix-facing; the sequence is GAGSWALTLFGFSAFRVPGQPRS. Residues 25–44 traverse the membrane as a helical; Signal-anchor for type II membrane protein segment; the sequence is TWLGVAALGLAAVALGTVAW. Topologically, residues 45–340 are cytoplasmic; it reads RRARPRRRRR…VGDPVYLLGQ (296 aa). Mo-molybdopterin contacts are provided by Lys70, Ser71, and Arg95. The MOSC N-terminal region stretch occupies residues 96–186; it reads FWLVINEEGN…KMQSCRLVHF (91 aa). The region spanning 191-338 is the MOSC domain; the sequence is RPRSSRQMKA…IRVGDPVYLL (148 aa). The Mo-molybdopterin site is built by Ser214, Arg241, Asn243, Thr274, Arg275, Cys276, and Tyr320.

Component of a complex composed of cytochrome b5, NADH-cytochrome b5 reductase and MTARC1. Mo-molybdopterin is required as a cofactor.

It localises to the mitochondrion outer membrane. The protein resides in the membrane. It carries out the reaction N(omega)-hydroxy-L-arginine + 2 Fe(II)-[cytochrome b5] + 2 H(+) = L-arginine + 2 Fe(III)-[cytochrome b5] + H2O. In terms of biological role, catalyzes the reduction of N-oxygenated molecules, acting as a counterpart of cytochrome P450 and flavin-containing monooxygenases in metabolic cycles. As a component of prodrug-converting system, reduces a multitude of N-hydroxylated prodrugs particularly amidoximes, leading to increased drug bioavailability. May be involved in mitochondrial N(omega)-hydroxy-L-arginine (NOHA) reduction, regulating endogenous nitric oxide levels and biosynthesis. Postulated to cleave the N-OH bond of N-hydroxylated substrates in concert with electron transfer from NADH to cytochrome b5 reductase then to cytochrome b5, the ultimate electron donor that primes the active site for substrate reduction. This Mus musculus (Mouse) protein is Mitochondrial amidoxime-reducing component 1 (Mtarc1).